Here is a 494-residue protein sequence, read N- to C-terminus: Casein kinase I homolog HRR25 (494 aa).

One can recognise a Protein kinase domain in the interval 9–278 (FRIGRKIGSG…LARLFKDLSI (270 aa)). Residues 15–23 (IGSGSFGDI) and Lys38 contribute to the ATP site. Catalysis depends on Asp128, which acts as the Proton acceptor. The residue at position 143 (Ser143) is a Phosphoserine. The segment at 394 to 494 (RQQQPQQQVQ…DKPAGQSIWL (101 aa)) is disordered. Composition is skewed to low complexity over residues 395-418 (QQQP…QQQP) and 432-444 (QQQQ…QQQQ). A compositionally biased stretch (polar residues) spans 445 to 479 (VPMATTRATQYPPQINSNNFNTNQASVPPQMRSNP).

It belongs to the protein kinase superfamily. CK1 Ser/Thr protein kinase family. Casein kinase I subfamily. As to quaternary structure, interacts with HRI1. Interacts with ELP1/IKI3; the interaction leads to ELP1/IKI3 phosphorylation.

Its subcellular location is the cytoplasm. It localises to the nucleus. The protein resides in the nucleolus. It is found in the nucleoplasm. The enzyme catalyses L-seryl-[protein] + ATP = O-phospho-L-seryl-[protein] + ADP + H(+). It catalyses the reaction L-threonyl-[protein] + ATP = O-phospho-L-threonyl-[protein] + ADP + H(+). Its function is as follows. Protein kinase which phosphorylates serine and threonine residues. Can use casein as a substrate. Phosphorylates elongator complex member ELP1/IKI3 on 'Ser-1198' and 'Ser-1202' which promotes the tRNA modification function of the complex. Associated with repair of damaged DNA and meiosis. This is Casein kinase I homolog HRR25 (HRR25) from Saccharomyces cerevisiae (strain ATCC 204508 / S288c) (Baker's yeast).